The chain runs to 150 residues: Probable deoxyuridine 5'-triphosphate nucleotidohydrolase (150 aa).

The protein belongs to the dCTP deaminase family. Archaeal dUTPase subfamily.

It carries out the reaction dUTP + H2O = dUMP + diphosphate + H(+). Its pathway is pyrimidine metabolism; dUMP biosynthesis; dUMP from dCTP (dUTP route): step 2/2. Its function is as follows. This enzyme is involved in nucleotide metabolism: it produces dUMP, the immediate precursor of thymidine nucleotides and it decreases the intracellular concentration of dUTP so that uracil cannot be incorporated into DNA. The polypeptide is Probable deoxyuridine 5'-triphosphate nucleotidohydrolase (Methanothermobacter thermautotrophicus (strain ATCC 29096 / DSM 1053 / JCM 10044 / NBRC 100330 / Delta H) (Methanobacterium thermoautotrophicum)).